A 2135-amino-acid polypeptide reads, in one-letter code: Plexin-B1 (2135 aa).

A signal peptide spans 1–19 (MPALGPALLQALWAGWVLT). In terms of domain architecture, Sema spans 20–479 (LQPLPPTAFT…TQSTLLKVPV (460 aa)). Over 20–1490 (LQPLPPTAFT…SPGAFPVAAQ (1471 aa)) the chain is Extracellular. A glycan (N-linked (GlcNAc...) asparagine) is linked at Asn-31. 9 disulfides stabilise this stretch: Cys-79–Cys-88, Cys-111–Cys-119, Cys-252–Cys-377, Cys-268–Cys-322, Cys-340–Cys-364, Cys-482–Cys-499, Cys-488–Cys-533, Cys-491–Cys-508, and Cys-502–Cys-514. An N-linked (GlcNAc...) asparagine glycan is attached at Asn-334. N-linked (GlcNAc...) asparagine glycosylation occurs at Asn-543. Cys-570 and Cys-588 are disulfide-bonded. Disordered regions lie at residues 671 to 829 (MVAS…TTFP) and 849 to 884 (LPEA…PPAP). Pro residues predominate over residues 681–697 (SPDPPARGGPSPSPPTA). 2 stretches are compositionally biased toward low complexity: residues 698 to 710 (PKAL…DTLP) and 734 to 754 (SPWG…TGSP). IPT/TIG domains are found at residues 1070–1160 (PLIH…FAYQ), 1162–1249 (PKVH…FKYT), and 1252–1375 (PNIT…FSYE). N-linked (GlcNAc...) asparagine glycans are attached at residues Asn-1183, Asn-1253, and Asn-1330. Residues 1491–1511 (VGLGVGTSLLALGVIIIVLMY) form a helical membrane-spanning segment. Positions 1507–1539 (IVLMYRRKSKQALRDYKKVQIQLENLESSVRDR) form a coiled coil. Residues 1512–2135 (RRKSKQALRD…AAVENKVTDL (624 aa)) lie on the Cytoplasmic side of the membrane. The disordered stretch occupies residues 1883–1908 (PWHLVKPSDEPEPPRPRRGSLRGGER). The span at 1888–1897 (KPSDEPEPPR) shows a compositional bias: basic and acidic residues.

This sequence belongs to the plexin family. In terms of assembly, monomer, and heterodimer with PLXNB2 after proteolytic processing. Binds RAC1 that has been activated by GTP binding. Interaction with SEMA4D promotes binding of cytoplasmic ligands. Interacts with PLXNA1. Interacts with ARHGEF11 and ARHGEF12. Interacts with ERBB2. Interacts with MET. Interacts with MST1R. Interacts with RRAS. Interacts with RHOD. Interacts with RND1. Interacts with NRP1 and NRP2. Post-translationally, phosphorylated on tyrosine residues by ERBB2 and MET upon SEMA4D binding. In terms of processing, proteolytic processing favors heterodimerization with PLXNB2 and SEMA4D binding. Highly expressed in fetal kidney, and at slightly lower levels in fetal brain, lung and liver.

It localises to the cell membrane. Its subcellular location is the secreted. Receptor for SEMA4D. Plays a role in GABAergic synapse development. Mediates SEMA4A- and SEMA4D-dependent inhibitory synapse development. Plays a role in RHOA activation and subsequent changes of the actin cytoskeleton. Plays a role in axon guidance, invasive growth and cell migration. This is Plexin-B1 (PLXNB1) from Homo sapiens (Human).